The following is a 161-amino-acid chain: Myosin regulatory light chain (161 aa).

Ser13 and Ser14 each carry phosphoserine. 3 EF-hand domains span residues 20 to 55 (EQVAELKEAFELFDKDRTGFIKKDALKTTCKQFGVF), 56 to 91 (VMEDQLDAMFAEADTTKSGAIGFPEFMSMMSRRMKQ), and 93 to 128 (SNEQILMNAFKTFDPEGNGYILTKDLSKALTTLGDK).

As to quaternary structure, myosin is a hexamer of 2 heavy chains and 4 light chains (two regulatory light chains and two essential light chains).

This is Myosin regulatory light chain (mlcR) from Dictyostelium discoideum (Social amoeba).